The chain runs to 276 residues: uncharacterized protein (276 aa).

The tract at residues 1 to 70 is disordered; the sequence is MSKAKSPIKS…SDDDEEDSPN (70 aa). Over residues 21–35 the composition is skewed to basic and acidic residues; that stretch reads VLREKKVKDAEKAEH. One can recognise an RRM domain in the interval 105–183; the sequence is GVLYVGRLPH…KLLQCKVIPE (79 aa). The tract at residues 249–276 is disordered; the sequence is VSHPKAASPVASKKSSKKKNKKVLAAHK. Positions 252–261 are enriched in low complexity; sequence PKAASPVASK. Basic residues predominate over residues 262 to 276; that stretch reads KSSKKKNKKVLAAHK.

It localises to the nucleus. It is found in the nucleolus. This is an uncharacterized protein from Schizosaccharomyces pombe (strain 972 / ATCC 24843) (Fission yeast).